The following is a 123-amino-acid chain: Ribosome-binding factor A (123 aa).

This sequence belongs to the RbfA family. Monomer. Binds 30S ribosomal subunits, but not 50S ribosomal subunits or 70S ribosomes.

The protein resides in the cytoplasm. One of several proteins that assist in the late maturation steps of the functional core of the 30S ribosomal subunit. Associates with free 30S ribosomal subunits (but not with 30S subunits that are part of 70S ribosomes or polysomes). Required for efficient processing of 16S rRNA. May interact with the 5'-terminal helix region of 16S rRNA. In Lactobacillus gasseri (strain ATCC 33323 / DSM 20243 / BCRC 14619 / CIP 102991 / JCM 1131 / KCTC 3163 / NCIMB 11718 / NCTC 13722 / AM63), this protein is Ribosome-binding factor A.